Here is a 266-residue protein sequence, read N- to C-terminus: GTP cyclohydrolase III (266 aa).

It belongs to the archaeal-type GTP cyclohydrolase family.

The enzyme catalyses GTP + 3 H2O = 2-amino-5-formylamino-6-(5-phospho-D-ribosylamino)pyrimidin-4(3H)-one + 2 phosphate + 2 H(+). In terms of biological role, catalyzes the formation of 2-amino-5-formylamino-6-ribofuranosylamino-4(3H)-pyrimidinone ribonucleotide monophosphate and inorganic phosphate from GTP. Also has an independent pyrophosphate phosphohydrolase activity. In Methanococcus maripaludis (strain C5 / ATCC BAA-1333), this protein is GTP cyclohydrolase III.